Reading from the N-terminus, the 730-residue chain is Guanylate cyclase soluble subunit alpha-2 (730 aa).

The tract at residues 1-53 (MSRRKISSESFSSLGSDYLETSPEEEGECPLSKLCWNGSRSPPGPPGSRAAAM) is disordered. Residues 519 to 646 (TMLFSDIVGF…NNVTLASKFE (128 aa)) enclose the Guanylate cyclase domain.

This sequence belongs to the adenylyl cyclase class-4/guanylyl cyclase family. Heterodimer of an alpha and a beta chain.

It is found in the cytoplasm. It catalyses the reaction GTP = 3',5'-cyclic GMP + diphosphate. With respect to regulation, activated by nitric oxide in the presence of magnesium or manganese ions. Has guanylyl cyclase on binding to the beta-1 subunit. This is Guanylate cyclase soluble subunit alpha-2 (Gucy1a2) from Rattus norvegicus (Rat).